A 427-amino-acid polypeptide reads, in one-letter code: 3-phosphoshikimate 1-carboxyvinyltransferase (427 aa).

3-phosphoshikimate-binding residues include Lys23, Ser24, and Arg28. Lys23 contacts phosphoenolpyruvate. Positions 97 and 125 each coordinate phosphoenolpyruvate. Ser170, Ser171, Gln172, Ser198, Asp314, Asn337, and Lys341 together coordinate 3-phosphoshikimate. Gln172 contributes to the phosphoenolpyruvate binding site. Catalysis depends on Asp314, which acts as the Proton acceptor. Arg345, Arg387, and Lys412 together coordinate phosphoenolpyruvate.

This sequence belongs to the EPSP synthase family. In terms of assembly, monomer.

It localises to the cytoplasm. The catalysed reaction is 3-phosphoshikimate + phosphoenolpyruvate = 5-O-(1-carboxyvinyl)-3-phosphoshikimate + phosphate. It functions in the pathway metabolic intermediate biosynthesis; chorismate biosynthesis; chorismate from D-erythrose 4-phosphate and phosphoenolpyruvate: step 6/7. Catalyzes the transfer of the enolpyruvyl moiety of phosphoenolpyruvate (PEP) to the 5-hydroxyl of shikimate-3-phosphate (S3P) to produce enolpyruvyl shikimate-3-phosphate and inorganic phosphate. The polypeptide is 3-phosphoshikimate 1-carboxyvinyltransferase (Buchnera aphidicola subsp. Acyrthosiphon pisum (strain Tuc7)).